The following is a 103-amino-acid chain: Large ribosomal subunit protein bL21 (103 aa).

Belongs to the bacterial ribosomal protein bL21 family. As to quaternary structure, part of the 50S ribosomal subunit. Contacts protein L20.

In terms of biological role, this protein binds to 23S rRNA in the presence of protein L20. In Pseudomonas syringae pv. tomato (strain ATCC BAA-871 / DC3000), this protein is Large ribosomal subunit protein bL21.